Reading from the N-terminus, the 355-residue chain is Glycerol-3-phosphate dehydrogenase [NAD(P)+] (355 aa).

Positions 14, 15, 35, and 117 each coordinate NADPH. Sn-glycerol 3-phosphate contacts are provided by Lys117, Gly147, and Ser149. Ala151 contacts NADPH. The sn-glycerol 3-phosphate site is built by Lys202, Asp255, Ser265, Arg266, and Asn267. Lys202 functions as the Proton acceptor in the catalytic mechanism. Residue Arg266 participates in NADPH binding. 2 residues coordinate NADPH: Ile290 and Glu292.

The protein belongs to the NAD-dependent glycerol-3-phosphate dehydrogenase family.

It is found in the cytoplasm. The enzyme catalyses sn-glycerol 3-phosphate + NAD(+) = dihydroxyacetone phosphate + NADH + H(+). It catalyses the reaction sn-glycerol 3-phosphate + NADP(+) = dihydroxyacetone phosphate + NADPH + H(+). The protein operates within membrane lipid metabolism; glycerophospholipid metabolism. Catalyzes the reduction of the glycolytic intermediate dihydroxyacetone phosphate (DHAP) to sn-glycerol 3-phosphate (G3P), the key precursor for phospholipid synthesis. The chain is Glycerol-3-phosphate dehydrogenase [NAD(P)+] from Lawsonia intracellularis (strain PHE/MN1-00).